Consider the following 387-residue polypeptide: G-protein coupled receptor homolog R33 (387 aa).

Residues 1–33 (MDVLLGTEELEDELHQLHFNYTCVPSLGLSVAR) are Extracellular-facing. The N-linked (GlcNAc...) asparagine; by host glycan is linked to N20. Residues 34 to 61 (DAETAVNFLIVLVGGPMNFLVLATQMLS) traverse the membrane as a helical segment. Residues 62–71 (NRSYSVSTPT) are Cytoplasmic-facing. A helical transmembrane segment spans residues 72–94 (LYMTNLYLANLLTVATLPFLMLS). Over 95 to 107 (NRGLVGSSPEGCK) the chain is Extracellular. The chain crosses the membrane as a helical span at residues 108–129 (IAALAYYATCTAGFATLMLIAI). Over 130–150 (NRYRVIHQRTRSGAGSKRQTY) the chain is Cytoplasmic. The helical transmembrane segment at 151-169 (AVLAVTWLASLMCASPAPL) threads the bilayer. The Extracellular portion of the chain corresponds to 170 to 204 (YATVMAHDSADALAFETCIIYFSYDQVKTVLATFK). Residues 205 to 224 (ILITMIWGITPVVMMSWFYV) traverse the membrane as a helical segment. The Cytoplasmic portion of the chain corresponds to 225–244 (FFYRRLKLTSYRRRSQTLTF). Residues 245-268 (VTTLMLSFLVVQTPFVAIMSYDSY) form a helical membrane-spanning segment. Topologically, residues 269–285 (GVLNWPINCDTINKRDA) are extracellular. A helical membrane pass occupies residues 286–309 (VSMLARVVPNFHCLLNPVLYAFLG). Topologically, residues 310–387 (RDFNKRFILC…PPPPPPPPNC (78 aa)) are cytoplasmic. The interval 368 to 387 (RLRALGRPPPPPPPPPPPNC) is disordered. Positions 374-387 (RPPPPPPPPPPPNC) are enriched in pro residues.

Belongs to the G-protein coupled receptor 1 family.

The protein localises to the host cell membrane. Functionally, plays an important role in vivo, in particular in the dissemination to or replication in the salivary gland. This is G-protein coupled receptor homolog R33 from Rattus.